The sequence spans 334 residues: Probable fructose-bisphosphate aldolase class 1 (334 aa).

The protein belongs to the class I fructose-bisphosphate aldolase family.

The catalysed reaction is beta-D-fructose 1,6-bisphosphate = D-glyceraldehyde 3-phosphate + dihydroxyacetone phosphate. The protein operates within carbohydrate degradation; glycolysis; D-glyceraldehyde 3-phosphate and glycerone phosphate from D-glucose: step 4/4. The chain is Probable fructose-bisphosphate aldolase class 1 from Xanthomonas campestris pv. campestris (strain ATCC 33913 / DSM 3586 / NCPPB 528 / LMG 568 / P 25).